We begin with the raw amino-acid sequence, 187 residues long: Protein GrpE (187 aa).

Basic and acidic residues predominate over residues Met1–Glu11. The disordered stretch occupies residues Met1–Glu21.

It belongs to the GrpE family. As to quaternary structure, homodimer.

It is found in the cytoplasm. Functionally, participates actively in the response to hyperosmotic and heat shock by preventing the aggregation of stress-denatured proteins, in association with DnaK and GrpE. It is the nucleotide exchange factor for DnaK and may function as a thermosensor. Unfolded proteins bind initially to DnaJ; upon interaction with the DnaJ-bound protein, DnaK hydrolyzes its bound ATP, resulting in the formation of a stable complex. GrpE releases ADP from DnaK; ATP binding to DnaK triggers the release of the substrate protein, thus completing the reaction cycle. Several rounds of ATP-dependent interactions between DnaJ, DnaK and GrpE are required for fully efficient folding. The protein is Protein GrpE of Chlamydia caviae (strain ATCC VR-813 / DSM 19441 / 03DC25 / GPIC) (Chlamydophila caviae).